Reading from the N-terminus, the 142-residue chain is Large ribosomal subunit protein uL11 (142 aa).

This sequence belongs to the universal ribosomal protein uL11 family. Part of the ribosomal stalk of the 50S ribosomal subunit. Interacts with L10 and the large rRNA to form the base of the stalk. L10 forms an elongated spine to which L12 dimers bind in a sequential fashion forming a multimeric L10(L12)X complex. One or more lysine residues are methylated.

Its function is as follows. Forms part of the ribosomal stalk which helps the ribosome interact with GTP-bound translation factors. This chain is Large ribosomal subunit protein uL11, found in Mycobacterium sp. (strain MCS).